Consider the following 249-residue polypeptide: Aquaporin TIP4-1 (249 aa).

Met-1 carries the N-acetylmethionine modification. Over 1–20 (MKKIELGHHSEAAKPDCIKA) the chain is Cytoplasmic. Lys-3 bears the N6,N6-dimethyllysine mark. A helical membrane pass occupies residues 21–41 (LIVEFITTFLFVFAGVGSAMA). Residues 42–49 (TDSLVGNT) lie on the Vacuolar side of the membrane. Residues 50-70 (LVGLFAVAVAHAFVVAVMISA) form a helical membrane-spanning segment. Topologically, residues 71–105 (GHISGGHLNPAVTLGLLLGGHISVFRAFLYWIDQL) are cytoplasmic. Positions 79–81 (NPA) match the NPA 1 motif. Residues 106–126 (LASSAACFLLSYLTGGMGTPV) form a helical membrane-spanning segment. The Vacuolar portion of the chain corresponds to 127–137 (HTLASGVSYTQ). A helical membrane pass occupies residues 138–158 (GIIWEIILTFSLLFTVYATIV). Topologically, residues 159–166 (DPKKGSLD) are cytoplasmic. A helical transmembrane segment spans residues 167–187 (GFGPLLTGFVVGANILAGGAF). Residues 188 to 212 (SGASMNPARSFGPALVSGNWTDHWV) are Vacuolar-facing. An NPA 2 motif is present at residues 193–195 (NPA). A helical transmembrane segment spans residues 213-233 (YWVGPLIGGGLAGFIYENVLI). The Cytoplasmic portion of the chain corresponds to 234–249 (DRPHVPVADDEQPLLN).

This sequence belongs to the MIP/aquaporin (TC 1.A.8) family. TIP (TC 1.A.8.10) subfamily. In terms of tissue distribution, expressed in roots.

It localises to the vacuole membrane. In terms of biological role, aquaporins facilitate the transport of water and small neutral solutes across cell membranes. Transports urea in yeast cells in a pH-independent manner. The chain is Aquaporin TIP4-1 (TIP4-1) from Arabidopsis thaliana (Mouse-ear cress).